The primary structure comprises 196 residues: CRISPR-associated exonuclease Cas4 (196 aa).

Cys-23 contacts [4Fe-4S] cluster. 3 residues coordinate Mn(2+): His-50, Asp-90, and Glu-103. 3 residues coordinate [4Fe-4S] cluster: Cys-184, Cys-187, and Cys-193.

It belongs to the CRISPR-associated exonuclease Cas4 family. Requires Mg(2+) as cofactor. [4Fe-4S] cluster serves as cofactor.

It catalyses the reaction exonucleolytic cleavage in the 5'- to 3'-direction to yield nucleoside 3'-phosphates.. Its function is as follows. CRISPR (clustered regularly interspaced short palindromic repeat) is an adaptive immune system that provides protection against mobile genetic elements (viruses, transposable elements and conjugative plasmids). CRISPR clusters contain sequences complementary to antecedent mobile elements and target invading nucleic acids. CRISPR clusters are transcribed and processed into CRISPR RNA (crRNA). This may be a 5' to 3' ssDNA exonuclease. This chain is CRISPR-associated exonuclease Cas4, found in Francisella tularensis subsp. novicida (strain U112).